The primary structure comprises 176 residues: ATP-dependent protease subunit HslV (176 aa).

Residue threonine 2 is part of the active site. The Na(+) site is built by glycine 157, cysteine 160, and threonine 163.

Belongs to the peptidase T1B family. HslV subfamily. A double ring-shaped homohexamer of HslV is capped on each side by a ring-shaped HslU homohexamer. The assembly of the HslU/HslV complex is dependent on binding of ATP.

It localises to the cytoplasm. The enzyme catalyses ATP-dependent cleavage of peptide bonds with broad specificity.. With respect to regulation, allosterically activated by HslU binding. Its function is as follows. Protease subunit of a proteasome-like degradation complex believed to be a general protein degrading machinery. The polypeptide is ATP-dependent protease subunit HslV (Pseudomonas savastanoi pv. phaseolicola (strain 1448A / Race 6) (Pseudomonas syringae pv. phaseolicola (strain 1448A / Race 6))).